The sequence spans 267 residues: Phosphate import ATP-binding protein PstB (267 aa).

One can recognise an ABC transporter domain in the interval 21–262; it reads VAARNLDFYY…PSKQQTEDYI (242 aa). 53–60 is a binding site for ATP; that stretch reads GPSGCGKS.

The protein belongs to the ABC transporter superfamily. Phosphate importer (TC 3.A.1.7) family. The complex is composed of two ATP-binding proteins (PstB), two transmembrane proteins (PstC and PstA) and a solute-binding protein (PstS).

The protein localises to the cell inner membrane. The enzyme catalyses phosphate(out) + ATP + H2O = ADP + 2 phosphate(in) + H(+). Functionally, part of the ABC transporter complex PstSACB involved in phosphate import. Responsible for energy coupling to the transport system. The polypeptide is Phosphate import ATP-binding protein PstB (Xanthomonas euvesicatoria pv. vesicatoria (strain 85-10) (Xanthomonas campestris pv. vesicatoria)).